The primary structure comprises 474 residues: B-cell CLL/lymphoma 6 member B protein (474 aa).

Residues 38–105 (TDVTLLVGGQ…MYTSRLRLSP (68 aa)) form the BTB domain. 2 disordered regions span residues 144-190 (PVEV…PDPK) and 210-249 (GSLV…GLQS). Over residues 150-160 (PRPPTVAPPGS) the composition is skewed to pro residues. The segment covering 162–172 (RRSEGHPDPPT) has biased composition (basic and acidic residues). 3 stretches are compositionally biased toward polar residues: residues 173-183 (ESRSCSQGSPS), 210-220 (GSLVGESSGQP), and 240-249 (EEGTTPGLQS). 5 consecutive C2H2-type zinc fingers follow at residues 323-345 (YKCQ…RTVH), 351-373 (YRCS…SRIH), 379-401 (YKCE…VLIH), 407-429 (YPCP…VRIH), and 435-458 (YHCD…RQKH).

As to quaternary structure, associates with BCL6 through the BTB domain. Ubiquitously expressed with higher expression found in heart and lung.

The protein resides in the nucleus. Acts as a sequence-specific transcriptional repressor in association with BCL6. Necessary for activation of naive T-cells to antigenic stimulation. May attenuate the regulatory effect of BCL6 on antigenic activation of naive CD4 T-cells by forming a heterodimer with BCL6. The chain is B-cell CLL/lymphoma 6 member B protein (Bcl6b) from Mus musculus (Mouse).